The primary structure comprises 210 residues: Histone H1A (210 aa).

Disordered regions lie at residues 1-49 (MAEA…VSEQ) and 101-210 (KGSG…PKKK). Composition is skewed to low complexity over residues 26-45 (KKAA…SGPS) and 129-142 (PLAA…AAAK). The 72-residue stretch at 42–113 (SGPSVSEQIV…GASGSFKLNK (72 aa)) folds into the H15 domain. Composition is skewed to basic residues over residues 143–153 (KTAKSPKKPKK) and 160–180 (SPKK…KTAV). Residues 181 to 192 (KPKVAAKSPAKA) are compositionally biased toward low complexity. Residues 193 to 210 (KAAKPKVAKAKKAAPKKK) show a composition bias toward basic residues.

This sequence belongs to the histone H1/H5 family.

The protein resides in the nucleus. The protein localises to the chromosome. In terms of biological role, histones H1 are necessary for the condensation of nucleosome chains into higher-order structures. The polypeptide is Histone H1A (Xenopus laevis (African clawed frog)).